We begin with the raw amino-acid sequence, 84 residues long: M-zodatoxin-Lt2a (84 aa).

An N-terminal signal peptide occupies residues 1–22; sequence MKYFVIALALAVALVCIAESTA. The propeptide occupies 23 to 58; the sequence is YEVNEELENELDDLDDAAWLAVAEELQGLEDFEESR. The Processing quadruplet motif signature appears at 55 to 58; that stretch reads EESR.

In terms of processing, cleavage of the propeptide depends on the processing quadruplet motif (XXXR, with at least one of X being E). Expressed by the venom gland.

It localises to the secreted. Its function is as follows. It has antimicrobial activity against Gram-positive bacteria (A.globiformis VKM Ac-1112 (MIC=0.7 uM), and B.subtilis VKM B-501 (MIC=0.4 uM)), Gram-negative bacteria (E.coli DH5-alpha (MIC=1.0 uM), E.coli MH1 (MIC=0.7 uM), and P.aeruginosa PAO1 (MIC=6.7 uM)), and yeasts (P.pastoris GS115 (MIC=6.7 uM), and S.cerevisiae Y190 (MIC=54 uM)). Also has a strong hemolytic activity against rabbit erythrocytes. Causes paralysis, but is not lethal when injected into insect (M.domestica) larvae. The sequence is that of M-zodatoxin-Lt2a from Lachesana tarabaevi (Spider).